We begin with the raw amino-acid sequence, 328 residues long: tRNA N6-adenosine threonylcarbamoyltransferase (328 aa).

Residues His111 and His115 each coordinate Fe cation. Substrate-binding positions include 133-137, Asp166, Gly179, Asp183, and Asn270; that span reads LVSGG. Asp296 provides a ligand contact to Fe cation.

Belongs to the KAE1 / TsaD family. Requires Fe(2+) as cofactor.

The protein resides in the cytoplasm. The enzyme catalyses L-threonylcarbamoyladenylate + adenosine(37) in tRNA = N(6)-L-threonylcarbamoyladenosine(37) in tRNA + AMP + H(+). In terms of biological role, required for the formation of a threonylcarbamoyl group on adenosine at position 37 (t(6)A37) in tRNAs that read codons beginning with adenine. Is involved in the transfer of the threonylcarbamoyl moiety of threonylcarbamoyl-AMP (TC-AMP) to the N6 group of A37, together with TsaE and TsaB. TsaD likely plays a direct catalytic role in this reaction. The sequence is that of tRNA N6-adenosine threonylcarbamoyltransferase from Phytoplasma australiense.